A 430-amino-acid chain; its full sequence is Enolase (430 aa).

A (2R)-2-phosphoglycerate-binding site is contributed by Gln165. The Proton donor role is filled by Glu207. Mg(2+)-binding residues include Asp244, Glu287, and Asp314. Residues Lys339, Arg368, Ser369, and Lys390 each contribute to the (2R)-2-phosphoglycerate site. Lys339 (proton acceptor) is an active-site residue.

This sequence belongs to the enolase family. Component of the RNA degradosome, a multiprotein complex involved in RNA processing and mRNA degradation. Requires Mg(2+) as cofactor.

The protein resides in the cytoplasm. The protein localises to the secreted. It is found in the cell surface. The catalysed reaction is (2R)-2-phosphoglycerate = phosphoenolpyruvate + H2O. It functions in the pathway carbohydrate degradation; glycolysis; pyruvate from D-glyceraldehyde 3-phosphate: step 4/5. Its function is as follows. Catalyzes the reversible conversion of 2-phosphoglycerate (2-PG) into phosphoenolpyruvate (PEP). It is essential for the degradation of carbohydrates via glycolysis. This chain is Enolase, found in Stenotrophomonas maltophilia (strain K279a).